The sequence spans 325 residues: Glutarate 2-hydroxylase (325 aa).

Residues histidine 160, aspartate 162, and histidine 292 each contribute to the Fe cation site.

Belongs to the glutarate hydroxylase family. In terms of assembly, homotetramer. Fe(2+) serves as cofactor.

It catalyses the reaction glutarate + 2-oxoglutarate + O2 = (S)-2-hydroxyglutarate + succinate + CO2. The protein operates within amino-acid degradation. Acts as an alpha-ketoglutarate-dependent dioxygenase catalyzing hydroxylation of glutarate (GA) to L-2-hydroxyglutarate (L2HG). Functions in a L-lysine degradation pathway that proceeds via cadaverine, glutarate and L-2-hydroxyglutarate. The polypeptide is Glutarate 2-hydroxylase (Escherichia coli O7:K1 (strain IAI39 / ExPEC)).